The chain runs to 288 residues: Thymidylate synthase (288 aa).

DUMP contacts are provided by residues arginine 21 and 150–151; that span reads RR. Cysteine 170 acts as the Nucleophile in catalysis. DUMP is bound by residues 191–194, asparagine 202, and 232–234; these read RSGD and HIY. Aspartate 194 provides a ligand contact to (6R)-5,10-methylene-5,6,7,8-tetrahydrofolate. Residue alanine 287 participates in (6R)-5,10-methylene-5,6,7,8-tetrahydrofolate binding.

This sequence belongs to the thymidylate synthase family. Bacterial-type ThyA subfamily. In terms of assembly, homodimer.

It is found in the cytoplasm. The catalysed reaction is dUMP + (6R)-5,10-methylene-5,6,7,8-tetrahydrofolate = 7,8-dihydrofolate + dTMP. Its pathway is pyrimidine metabolism; dTTP biosynthesis. In terms of biological role, catalyzes the reductive methylation of 2'-deoxyuridine-5'-monophosphate (dUMP) to 2'-deoxythymidine-5'-monophosphate (dTMP) while utilizing 5,10-methylenetetrahydrofolate (mTHF) as the methyl donor and reductant in the reaction, yielding dihydrofolate (DHF) as a by-product. This enzymatic reaction provides an intracellular de novo source of dTMP, an essential precursor for DNA biosynthesis. The polypeptide is Thymidylate synthase (Mesoplasma florum (strain ATCC 33453 / NBRC 100688 / NCTC 11704 / L1) (Acholeplasma florum)).